The sequence spans 907 residues: Protein translocase subunit SecA (907 aa).

ATP is bound by residues Q87, G105–T109, and D511. Residues C891, C893, C902, and H903 each coordinate Zn(2+).

It belongs to the SecA family. Monomer and homodimer. Part of the essential Sec protein translocation apparatus which comprises SecA, SecYEG and auxiliary proteins SecDF-YajC and YidC. The cofactor is Zn(2+).

The protein resides in the cell inner membrane. It localises to the cytoplasm. It catalyses the reaction ATP + H2O + cellular proteinSide 1 = ADP + phosphate + cellular proteinSide 2.. Part of the Sec protein translocase complex. Interacts with the SecYEG preprotein conducting channel. Has a central role in coupling the hydrolysis of ATP to the transfer of proteins into and across the cell membrane, serving both as a receptor for the preprotein-SecB complex and as an ATP-driven molecular motor driving the stepwise translocation of polypeptide chains across the membrane. This is Protein translocase subunit SecA from Aromatoleum aromaticum (strain DSM 19018 / LMG 30748 / EbN1) (Azoarcus sp. (strain EbN1)).